Reading from the N-terminus, the 296-residue chain is Elongation factor Ts (296 aa).

The interval 79–82 (TDFV) is involved in Mg(2+) ion dislocation from EF-Tu.

Belongs to the EF-Ts family.

It localises to the cytoplasm. Associates with the EF-Tu.GDP complex and induces the exchange of GDP to GTP. It remains bound to the aminoacyl-tRNA.EF-Tu.GTP complex up to the GTP hydrolysis stage on the ribosome. In Paracoccus denitrificans (strain Pd 1222), this protein is Elongation factor Ts.